A 350-amino-acid polypeptide reads, in one-letter code: Probable poly-beta-1,6-N-acetyl-D-glucosamine export protein (350 aa).

The next 10 membrane-spanning stretches (helical) occupy residues Glu-7–Thr-29, Phe-44–Thr-66, Thr-79–Leu-101, Leu-116–Ile-138, Leu-145–Thr-167, Ile-187–Asn-204, Phe-211–Leu-233, Ser-243–Ile-262, Met-269–Ile-291, and Thr-306–Leu-328.

It belongs to the acyltransferase 3 family.

The protein localises to the cell membrane. Its function is as follows. Presumably involved in the export of the biofilm adhesin polysaccharide poly-beta-1,6-N-acetyl-D-glucosamine (PNAG, also referred to as PIA) across the cell membrane. The protein is Probable poly-beta-1,6-N-acetyl-D-glucosamine export protein (icaC) of Staphylococcus aureus (strain MRSA252).